Here is a 270-residue protein sequence, read N- to C-terminus: 2-C-methyl-D-erythritol 4-phosphate cytidylyltransferase (270 aa).

A disordered region spans residues 1 to 33 (MSDESRPSPAETPATTFAETSAETSAAGRSPAR). Low complexity predominate over residues 7–27 (PSPAETPATTFAETSAETSAA).

It belongs to the IspD/TarI cytidylyltransferase family. IspD subfamily.

The enzyme catalyses 2-C-methyl-D-erythritol 4-phosphate + CTP + H(+) = 4-CDP-2-C-methyl-D-erythritol + diphosphate. It functions in the pathway isoprenoid biosynthesis; isopentenyl diphosphate biosynthesis via DXP pathway; isopentenyl diphosphate from 1-deoxy-D-xylulose 5-phosphate: step 2/6. Functionally, catalyzes the formation of 4-diphosphocytidyl-2-C-methyl-D-erythritol from CTP and 2-C-methyl-D-erythritol 4-phosphate (MEP). This chain is 2-C-methyl-D-erythritol 4-phosphate cytidylyltransferase, found in Streptomyces coelicolor (strain ATCC BAA-471 / A3(2) / M145).